Consider the following 112-residue polypeptide: Small capsomere-interacting protein (112 aa).

This sequence belongs to the herpesviridae small capsomere-interacting protein family. Interacts with the major capsid protein/MCP.

The protein resides in the virion. Its subcellular location is the host nucleus. Its function is as follows. Participates in the assembly of the infectious particles by decorating the outer surface of the capsid shell and thus forming a layer between the capsid and the tegument. Complexes composed of the major capsid protein and small capsomere-interacting protein/SCP assemble together in the host cytoplasm and are translocated to the nucleus, where they accumulate and participate in capsid assembly. This is Small capsomere-interacting protein from Homo sapiens (Human).